Here is a 60-residue protein sequence, read N- to C-terminus: Cytotoxin 5 (60 aa).

Cystine bridges form between C3-C21, C14-C38, C42-C53, and C54-C59.

It belongs to the three-finger toxin family. Short-chain subfamily. Type IA cytotoxin sub-subfamily. In terms of assembly, monomer in solution; Homodimer and oligomer in the presence of negatively charged lipids forming a pore with a size ranging between 20 and 30 Angstroms. As to expression, expressed by the venom gland.

The protein localises to the secreted. It is found in the target cell membrane. In terms of biological role, shows cytolytic activity on many different cells by forming pore in lipid membranes. In vivo, increases heart rate or kills the animal by cardiac arrest. In addition, it binds to heparin with high affinity, interacts with Kv channel-interacting protein 1 (KCNIP1) in a calcium-independent manner, and binds to integrin alpha-V/beta-3 (ITGAV/ITGB3) with moderate affinity. The sequence is that of Cytotoxin 5 from Naja annulifera (Banded Egyptian cobra).